The following is a 315-amino-acid chain: Ribosomal RNA small subunit methyltransferase H (315 aa).

S-adenosyl-L-methionine contacts are provided by residues 33 to 35, D53, F80, D101, and Q108; that span reads AGH.

Belongs to the methyltransferase superfamily. RsmH family.

It localises to the cytoplasm. The catalysed reaction is cytidine(1402) in 16S rRNA + S-adenosyl-L-methionine = N(4)-methylcytidine(1402) in 16S rRNA + S-adenosyl-L-homocysteine + H(+). Specifically methylates the N4 position of cytidine in position 1402 (C1402) of 16S rRNA. This chain is Ribosomal RNA small subunit methyltransferase H, found in Natranaerobius thermophilus (strain ATCC BAA-1301 / DSM 18059 / JW/NM-WN-LF).